The following is a 3414-amino-acid chain: Genome polyprotein (3414 aa).

Positions 1–30 (MVKKAILKGKGGGPPRRVSKETATKTRQPR) are disordered. Topologically, residues 2-98 (VKKAILKGKG…LQKRGKRRSA (97 aa)) are cytoplasmic. Residues 97–117 (SATDWMSWLLVITLLGMTLAA) constitute a propeptide, ER anchor for the capsid protein C, removed in mature form by serine protease NS3. The chain crosses the membrane as a helical span at residues 99–119 (TDWMSWLLVITLLGMTLAATV). Over 120 to 242 (RKERDGSTVI…HLTRVEGWVW (123 aa)) the chain is Extracellular. Residue asparagine 144 is glycosylated (N-linked (GlcNAc...) asparagine; by host). The helical transmembrane segment at 243 to 260 (KNKLLALAMVTVVWLTLE) threads the bilayer. Residue serine 261 is a topological domain, cytoplasmic. A helical transmembrane segment spans residues 262–280 (VVTRVAVLVVLLCLAPVYA). The Extracellular segment spans residues 281–727 (SRCTHLENRD…HTVLGGAFNS (447 aa)). Intrachain disulfides connect cysteine 283–cysteine 310, cysteine 340–cysteine 396, cysteine 340–cysteine 401, cysteine 354–cysteine 385, cysteine 372–cysteine 396, and cysteine 372–cysteine 401. A fusion peptide region spans residues 378–391 (DRGWGNHCGLFGKG). N-linked (GlcNAc...) asparagine; by host glycosylation is present at asparagine 434. Disulfide bonds link cysteine 466-cysteine 570 and cysteine 587-cysteine 618. The chain crosses the membrane as a helical span at residues 728–748 (IFGGVGFLPKLLLGVALAWLG). The Extracellular portion of the chain corresponds to 749–755 (LNMRNPT). A helical transmembrane segment spans residues 756–776 (MSMSFLLAGGLVLAMTLGVGA). At 777-1132 (DVGCAVDTER…RSMVVADNGE (356 aa)) the chain is on the extracellular side. Cystine bridges form between cysteine 780/cysteine 791, cysteine 831/cysteine 920, cysteine 955/cysteine 1000, cysteine 1057/cysteine 1106, cysteine 1068/cysteine 1090, and cysteine 1089/cysteine 1093. 3 N-linked (GlcNAc...) asparagine; by host glycosylation sites follow: asparagine 861, asparagine 983, and asparagine 999. A helical transmembrane segment spans residues 1133–1153 (LLSEGGVPGIVALFVVLEYII). Topologically, residues 1154–1158 (RRRPS) are cytoplasmic. The helical transmembrane segment at 1159–1179 (TGTTVVWGGIVVLALLVTGMV) threads the bilayer. The Lumenal portion of the chain corresponds to 1180–1187 (RIESLVRY). A helical transmembrane segment spans residues 1188 to 1208 (VVAVGITFHLELGPEIVALML). The Cytoplasmic segment spans residues 1209–1293 (LQAVFELRVG…LLMALMTQQD (85 aa)). The chain crosses the membrane as a helical span at residues 1294-1314 (VVTVHHGLVCFLSVASACSVW). Residues 1315–1327 (RLLKGHREQKGLT) lie on the Lumenal side of the membrane. Residues 1328–1348 (WVVPLAGLLGGEGSGIRLLAF) traverse the membrane as a helical segment. Topologically, residues 1349–1359 (WELSAHRGRRS) are cytoplasmic. The helical transmembrane segment at 1360–1378 (FSEPLTVVGVMLTLASGMM) threads the bilayer. Residues 1379–1382 (RHTS) lie on the Lumenal side of the membrane. A helical membrane pass occupies residues 1383 to 1403 (QEALCALAVASFLLLMLVLGT). At 1404–1454 (RKMQLVAEWSGCVEWYPELVNEGGEVSLRVRQDAMGNFHLTELEKEERMMA) the chain is on the cytoplasmic side. Positions 1410 to 1449 (AEWSGCVEWYPELVNEGGEVSLRVRQDAMGNFHLTELEKE) are interacts with and activates NS3 protease. The helical intramembrane region spans 1455 to 1475 (FWLIAGLAASAIHWSGILGVM). Over 1476-2160 (GLWTLTEMLR…RMAERDAPEA (685 aa)) the chain is Cytoplasmic. Residues 1490–1669 (SDLVFSGQGG…EAEKSRPNLP (180 aa)) enclose the Peptidase S7 domain. Residues histidine 1543, aspartate 1567, and serine 1627 each act as charge relay system; for serine protease NS3 activity in the active site. In terms of domain architecture, Helicase ATP-binding spans 1675-1831 (TGWTSKGQIT…ESNGAITSEE (157 aa)). Residue 1688 to 1695 (MHPGSGKT) coordinates ATP. Positions 1779–1782 (DEAH) match the DEAH box motif. In terms of domain architecture, Helicase C-terminal spans 1841-2000 (DGFDWITEYE…TLRGPVATFY (160 aa)). An N6-acetyllysine; by host modification is found at lysine 1883. The chain crosses the membrane as a helical span at residues 2161 to 2181 (FLTMVEMMVLGLATLGVIWCF). At 2182–2189 (VVRTSISR) the chain is on the lumenal side. Positions 2190-2210 (MMLGTLVLLASLLLLWAGGVG) form an intramembrane region, helical. A topological domain (lumenal) is located at residue tyrosine 2211. The chain crosses the membrane as a helical span at residues 2212-2232 (GNMAGVALIFYTLLTVLQPEA). At 2233–2244 (GKQRSSDDNKLA) the chain is on the cytoplasmic side. A helical membrane pass occupies residues 2245-2265 (YFLLTLCSLAGLVAANEMGFL). The Lumenal segment spans residues 2266–2299 (EKTKADLSTALWSEREEPRPWSEWTNVDIQPARS). The segment at residues 2300–2320 (WGTYVLVVSLFTPYIIHQLQT) is an intramembrane region (helical). Residues 2321–2343 (KIQQLVNSAVASGAQAMRDLGGG) lie on the Lumenal side of the membrane. Positions 2344 to 2364 (APFFGVAGHVMTLGVVSLIGA) form an intramembrane region, helical. The Lumenal segment spans residues 2365-2368 (TPTS). The chain crosses the membrane as a helical span at residues 2369–2389 (LMVGVGLAALHLAIVVSGLEA). The Cytoplasmic portion of the chain corresponds to 2390–2432 (ELTQRAHKVFFSAMVRNPMVDGDVINPFGEGEAKPALYERKMS). A helical transmembrane segment spans residues 2433–2453 (LVLATVLCLMSVVMNRTVASI). Topologically, residues 2454-2477 (TEASAVGLAAAGQLLRPEADTLWT) are lumenal. A helical membrane pass occupies residues 2478 to 2498 (MPVACGMSGVVRGSLWGFLPL). The Cytoplasmic portion of the chain corresponds to 2499–3414 (GHRLWLRASG…WELRLESSII (916 aa)). The region spanning 2512–2776 (GGSEGDTLGD…ELDLGVGTRC (265 aa)) is the mRNA cap 0-1 NS5-type MT domain. Serine 2567 is a binding site for S-adenosyl-L-methionine. Serine 2567 is subject to Phosphoserine. The For 2'-O-MTase activity role is filled by lysine 2572. Residues glycine 2597, tryptophan 2598, threonine 2615, isoleucine 2616, aspartate 2642, and valine 2643 each coordinate S-adenosyl-L-methionine. Residue aspartate 2657 is the For 2'-O-MTase activity of the active site. S-adenosyl-L-methionine is bound at residue isoleucine 2658. Active-site for 2'-O-MTase activity residues include lysine 2694 and glutamate 2730. Residues 2730 to 2734 (EMYYS) are interaction with host SCRIB. S-adenosyl-L-methionine is bound at residue tyrosine 2732. Zn(2+) is bound by residues glutamate 2950, histidine 2954, cysteine 2959, and cysteine 2962. One can recognise a RdRp catalytic domain in the interval 3040–3189 (GLFYADDTAG…RPLDDRFGKA (150 aa)). 3 residues coordinate Zn(2+): histidine 3224, cysteine 3240, and cysteine 3359.

The protein in the N-terminal section; belongs to the class I-like SAM-binding methyltransferase superfamily. mRNA cap 0-1 NS5-type methyltransferase family. In terms of assembly, homodimer. Interacts (via N-terminus) with host EXOC1 (via C-terminus); this interaction results in EXOC1 degradation through the proteasome degradation pathway. Forms heterodimers with envelope protein E in the endoplasmic reticulum and Golgi. As to quaternary structure, homodimer; in the endoplasmic reticulum and Golgi. Interacts with protein prM. Interacts with non-structural protein 1. In terms of assembly, homodimer; Homohexamer when secreted. Interacts with envelope protein E. Interacts (via N-terminus) with serine protease NS3. As to quaternary structure, forms a heterodimer with serine protease NS3. May form homooligomers. In terms of assembly, forms a heterodimer with NS2B. Interacts with NS4B. Interacts with unphosphorylated RNA-directed RNA polymerase NS5; this interaction stimulates RNA-directed RNA polymerase NS5 guanylyltransferase activity. Interacts with serine protease NS3. Interacts with NS1. As to quaternary structure, homodimer. Interacts with host STAT2; this interaction inhibits the phosphorylation of the latter, and, when all viral proteins are present (polyprotein), targets STAT2 for degradation. Interacts with serine protease NS3. Interacts with host SCRIB; this interaction targets NS5 to the cell membrane periphery and nucleus, thereby allowing efficient host nuclear STAT1 inhibition. Post-translationally, specific enzymatic cleavages in vivo yield mature proteins. Cleavages in the lumen of endoplasmic reticulum are performed by host signal peptidase, whereas cleavages in the cytoplasmic side are performed by serine protease NS3. Signal cleavage at the 2K-4B site requires a prior NS3 protease-mediated cleavage at the 4A-2K site. Cleaved in post-Golgi vesicles by a host furin, releasing the mature small envelope protein M, and peptide pr. This cleavage is incomplete as up to 30% of viral particles still carry uncleaved prM. In terms of processing, N-glycosylated. Post-translationally, N-glycosylated. The excreted form is glycosylated and this is required for efficient secretion of the protein from infected cells. Acetylated by host KAT5. Acetylation modulates NS3 RNA-binding and unwinding activities and plays an important positive role for viral replication. In terms of processing, phosphorylated on serines residues. This phosphorylation may trigger NS5 nuclear localization.

The protein localises to the virion. It localises to the host nucleus. Its subcellular location is the host cytoplasm. It is found in the host perinuclear region. The protein resides in the secreted. The protein localises to the virion membrane. It localises to the host endoplasmic reticulum membrane. It catalyses the reaction Selective hydrolysis of -Xaa-Xaa-|-Yaa- bonds in which each of the Xaa can be either Arg or Lys and Yaa can be either Ser or Ala.. The catalysed reaction is RNA(n) + a ribonucleoside 5'-triphosphate = RNA(n+1) + diphosphate. It carries out the reaction a ribonucleoside 5'-triphosphate + H2O = a ribonucleoside 5'-diphosphate + phosphate + H(+). The enzyme catalyses ATP + H2O = ADP + phosphate + H(+). It catalyses the reaction a 5'-end (5'-triphosphoguanosine)-ribonucleoside in mRNA + S-adenosyl-L-methionine = a 5'-end (N(7)-methyl 5'-triphosphoguanosine)-ribonucleoside in mRNA + S-adenosyl-L-homocysteine. The catalysed reaction is a 5'-end (N(7)-methyl 5'-triphosphoguanosine)-ribonucleoside in mRNA + S-adenosyl-L-methionine = a 5'-end (N(7)-methyl 5'-triphosphoguanosine)-(2'-O-methyl-ribonucleoside) in mRNA + S-adenosyl-L-homocysteine + H(+). In terms of biological role, plays a role in virus budding by binding to the cell membrane and gathering the viral RNA into a nucleocapsid that forms the core of a mature virus particle. During virus entry, may induce genome penetration into the host cytoplasm after hemifusion induced by the surface proteins. Can migrate to the cell nucleus where it modulates host functions. Inhibits RNA silencing by interfering with host Dicer. Its function is as follows. Prevents premature fusion activity of envelope proteins in trans-Golgi by binding to envelope protein E at pH6.0. After virion release in extracellular space, gets dissociated from E dimers. Functionally, acts as a chaperone for envelope protein E during intracellular virion assembly by masking and inactivating envelope protein E fusion peptide. prM is the only viral peptide matured by host furin in the trans-Golgi network probably to avoid catastrophic activation of the viral fusion activity in acidic Golgi compartment prior to virion release. prM-E cleavage is inefficient, and many virions are only partially matured. These uncleaved prM would play a role in immune evasion. In terms of biological role, may play a role in virus budding. Exerts cytotoxic effects by activating a mitochondrial apoptotic pathway through M ectodomain. May display a viroporin activity. Binds to host cell surface receptor and mediates fusion between viral and cellular membranes. Envelope protein is synthesized in the endoplasmic reticulum in the form of heterodimer with protein prM. They play a role in virion budding in the ER, and the newly formed immature particle is covered with 60 spikes composed of heterodimer between precursor prM and envelope protein E. The virion is transported to the Golgi apparatus where the low pH causes dissociation of PrM-E heterodimers and formation of E homodimers. prM-E cleavage is inefficient, and many virions are only partially matured. These uncleaved prM would play a role in immune evasion. Its function is as follows. Involved in immune evasion, pathogenesis and viral replication. Once cleaved off the polyprotein, is targeted to three destinations: the viral replication cycle, the plasma membrane and the extracellular compartment. Essential for viral replication. Required for formation of the replication complex and recruitment of other non-structural proteins to the ER-derived membrane structures. Excreted as a hexameric lipoparticle that plays a role against host immune response. Antagonizing the complement function. Binds to the host macrophages and dendritic cells. Inhibits signal transduction originating from Toll-like receptor 3 (TLR3). Functionally, component of the viral RNA replication complex that functions in virion assembly and antagonizes the host immune response. In terms of biological role, required cofactor for the serine protease function of NS3. May have membrane-destabilizing activity and form viroporins. Displays three enzymatic activities: serine protease, NTPase and RNA helicase. NS3 serine protease, in association with NS2B, performs its autocleavage and cleaves the polyprotein at dibasic sites in the cytoplasm: C-prM, NS2A-NS2B, NS2B-NS3, NS3-NS4A, NS4A-2K and NS4B-NS5. NS3 RNA helicase binds RNA and unwinds dsRNA in the 3' to 5' direction. Its function is as follows. Regulates the ATPase activity of the NS3 helicase activity. NS4A allows NS3 helicase to conserve energy during unwinding. Functionally, functions as a signal peptide for NS4B and is required for the interferon antagonism activity of the latter. In terms of biological role, induces the formation of ER-derived membrane vesicles where the viral replication takes place. Inhibits interferon (IFN)-induced host STAT1 phosphorylation and nuclear translocation, thereby preventing the establishment of cellular antiviral state by blocking the IFN-alpha/beta pathway. Inhibits STAT2 translocation in the nucleus after IFN-alpha treatment. Replicates the viral (+) and (-) genome, and performs the capping of genomes in the cytoplasm. NS5 methylates viral RNA cap at guanine N-7 and ribose 2'-O positions. Besides its role in RNA genome replication, also prevents the establishment of cellular antiviral state by blocking the interferon-alpha/beta (IFN-alpha/beta) signaling pathway. Inhibits host TYK2 and STAT2 phosphorylation, thereby preventing activation of JAK-STAT signaling pathway. In Tick-borne encephalitis virus European subtype (strain Neudoerfl) (NEUV), this protein is Genome polyprotein.